The following is a 300-amino-acid chain: MPGLSDPVAFIKDFAAGGISAAISKTAVAPIERVKLLLQVQHISKQIAEADRYKGMVDCFVRIPREQGFSAFWRGNLANVIRYFPTQALNFAFKDKYKQVFLGGVDKNTQFTRYFIGNLASGGMAGATSLCFVYPLDFARTRLAADVGKGAEAREFKGLGDCISKIFKTDGLVGLYRGFGVSVQGIIIYRAAYFGFYDTARGMLPNPKTTPWYVSWAIAQCVTTVAGIVSYPFDTVRRRMMMQSGRAKSEIVYKGTLHCWATIAKQEGTGAFFKGAFSNVLRGTGGAFVLVLYDEIKKVL.

3 Solcar repeats span residues 8–100 (VAFI…YKQV), 113–203 (RYFI…ARGM), and 214–299 (VSWA…IKKV). The next 5 helical transmembrane spans lie at 10 to 39 (FIKDFAAGGISAAISKTAVAPIERVKLLLQ), 77 to 101 (LANVIRYFPTQALNFAFKDKYKQVF), 112 to 132 (TRYFIGNLASGGMAGATSLCF), 181 to 201 (VSVQGIIIYRAAYFGFYDTAR), and 213 to 233 (YVSWAIAQCVTTVAGIVSYPF). ADP-binding residues include Arg82 and Lys94. Residue Arg237 coordinates ADP. Residues 237–242 (RRRMMM) form an important for transport activity region. Residues 237 to 242 (RRRMMM) carry the Nucleotide carrier signature motif motif. A helical membrane pass occupies residues 276–293 (AFSNVLRGTGGAFVLVLY).

It belongs to the mitochondrial carrier (TC 2.A.29) family. In terms of assembly, monomer.

It localises to the mitochondrion inner membrane. It catalyses the reaction ADP(in) + ATP(out) = ADP(out) + ATP(in). Its activity is regulated as follows. The matrix-open state (m-state) is inhibited by the membrane-permeable bongkrekic acid (BKA). The cytoplasmic-open state (c-state) is inhibited by the membrane-impermeable toxic inhibitor carboxyatractyloside (CATR). In terms of biological role, ADP:ATP antiporter that mediates import of ADP into the mitochondrial matrix for ATP synthesis, and export of ATP out to fuel the cell. Cycles between the cytoplasmic-open state (c-state) and the matrix-open state (m-state): operates by the alternating access mechanism with a single substrate-binding site intermittently exposed to either the cytosolic (c-state) or matrix (m-state) side of the inner mitochondrial membrane. The chain is ADP,ATP carrier protein 2 from Anopheles gambiae (African malaria mosquito).